A 324-amino-acid chain; its full sequence is Ig gamma-1 chain C region secreted form (324 aa).

The segment at 1 to 97 is CH1; sequence AKTTPPSVYP…ASSTKVDKKI (97 aa). A disulfide bridge links C27 with C82. Positions 98–110 are hinge; it reads VPRDCGCKPCICT. The tract at residues 111 to 217 is CH2; the sequence is VPEVSSVFIF…PIEKTISKTK (107 aa). Disulfide bonds link C138–C198 and C244–C302. N174 is a glycosylation site (N-linked (GlcNAc...) asparagine). The tract at residues 218-324 is CH3; it reads GRPKAPQVYT…EKSLSHSPGK (107 aa).

It is found in the secreted. The protein is Ig gamma-1 chain C region secreted form (Ighg1) of Mus musculus (Mouse).